Consider the following 1134-residue polypeptide: Ankyrin repeat and SAM domain-containing protein 1A (1134 aa).

The residue at position 2 (glycine 2) is an N-acetylglycine. The segment covering 33-55 has biased composition (gly residues); the sequence is GGGGGGGSGGGGGGSGGGGGGLG. Residues 33–57 are disordered; it reads GGGGGGGSGGGGGGSGGGGGGLGSS. ANK repeat units follow at residues 79–108, 112–141, 148–177, 181–210, 214–243, and 246–275; these read TGYTPLHHAALNGHKDVVEVLLRNDALTNV, KGCYPLHLAAWKGDAQIVRLLIHQGPSHTR, DNETALHCAAQYGHTEVVKVLLEELTDPTM, KFETPLDLAALYGRLEVVKMLLNAHPNLLS, KKHTPLHLAARNGHKAVVQVLLDAGMDSNY, and EMGSALHEAALFGKTDVVQILLAAGTDVNI. Basic and acidic residues predominate over residues 305–317; sequence HMTGKRSTKEVDK. Disordered stretches follow at residues 305–338, 375–422, and 469–498; these read HMTGKRSTKEVDKTPPPQPPLISSMDSISQKSQG, SMAS…EEDH, and VDGKTKDHRRSSSSRSQDSAEGQDGQVPEQ. Threonine 318 carries the post-translational modification Phosphothreonine. Residues 328–337 are compositionally biased toward polar residues; that stretch reads SMDSISQKSQ. The span at 382–392 shows a compositional bias: basic and acidic residues; it reads SDQDSTNKEAE. Residue serine 507 is modified to Phosphoserine. Residues 569-650 form a disordered region; the sequence is LTGLPTTNSR…MGSRSESLSN (82 aa). Positions 572–588 are enriched in polar residues; that stretch reads LPTTNSRSHPETLTHTA. Residues 613-628 are compositionally biased toward basic and acidic residues; the sequence is PKAELKLSRSLSKSDS. 10 positions are modified to phosphoserine: serine 620, serine 622, serine 624, serine 626, serine 628, serine 647, serine 661, serine 663, serine 666, and serine 677. The span at 633–650 shows a compositional bias: polar residues; that stretch reads CSPTEDATMGSRSESLSN. SAM domains lie at 696-762 and 770-837; these read TLEQ…LPKV and NSPP…YEEP. The segment covering 856–868 has biased composition (polar residues); sequence TSSPLSQNDSCTG. 2 disordered regions span residues 856–896 and 1079–1134; these read TSSP…APSR and AEMI…LSTN. A Phosphoserine modification is found at serine 887. A PID domain is found at 936–1091; the sequence is IFESCGYEAN…IETKSSKPVP (156 aa). The segment covering 1123–1134 has biased composition (basic and acidic residues); the sequence is PKPDSKRSLSTN.

As to quaternary structure, interacts (via SAM domain) with EPHA2 (via SAM domain). Interacts with EPHA8; EPHA8 kinase activity-independent but stimulated by EPHA8 ubiquitination. Interacts (via SAM domain) with EPHA6 (via SAM domain). In terms of processing, phosphorylated on tyrosine residues in response to EGF and PDGF. In terms of tissue distribution, widely expressed (at protein level).

It is found in the cytoplasm. It localises to the cell projection. In terms of biological role, regulator of different signaling pathways. Regulates EPHA8 receptor tyrosine kinase signaling to control cell migration and neurite retraction. The chain is Ankyrin repeat and SAM domain-containing protein 1A (ANKS1A) from Homo sapiens (Human).